The following is a 194-amino-acid chain: ATP-dependent Clp protease proteolytic subunit (194 aa).

The Nucleophile role is filled by Ser-98. His-123 is a catalytic residue.

The protein belongs to the peptidase S14 family. In terms of assembly, fourteen ClpP subunits assemble into 2 heptameric rings which stack back to back to give a disk-like structure with a central cavity, resembling the structure of eukaryotic proteasomes.

Its subcellular location is the cytoplasm. The enzyme catalyses Hydrolysis of proteins to small peptides in the presence of ATP and magnesium. alpha-casein is the usual test substrate. In the absence of ATP, only oligopeptides shorter than five residues are hydrolyzed (such as succinyl-Leu-Tyr-|-NHMec, and Leu-Tyr-Leu-|-Tyr-Trp, in which cleavage of the -Tyr-|-Leu- and -Tyr-|-Trp bonds also occurs).. Its function is as follows. Cleaves peptides in various proteins in a process that requires ATP hydrolysis. Has a chymotrypsin-like activity. Plays a major role in the degradation of misfolded proteins. The sequence is that of ATP-dependent Clp protease proteolytic subunit from Clostridium botulinum (strain Loch Maree / Type A3).